Reading from the N-terminus, the 276-residue chain is Large ribosomal subunit protein uL2 (276 aa).

Disordered regions lie at residues 37-59 (QIQK…GGHK) and 225-276 (VMNP…RHKR). Residues 39–49 (QKSGRNNNGHI) are compositionally biased toward polar residues. The segment covering 50–59 (TTRHKGGGHK) has biased composition (basic residues).

The protein belongs to the universal ribosomal protein uL2 family. As to quaternary structure, part of the 50S ribosomal subunit. Forms a bridge to the 30S subunit in the 70S ribosome.

One of the primary rRNA binding proteins. Required for association of the 30S and 50S subunits to form the 70S ribosome, for tRNA binding and peptide bond formation. It has been suggested to have peptidyltransferase activity; this is somewhat controversial. Makes several contacts with the 16S rRNA in the 70S ribosome. The sequence is that of Large ribosomal subunit protein uL2 from Ralstonia pickettii (strain 12J).